We begin with the raw amino-acid sequence, 466 residues long: Soluble pyridine nucleotide transhydrogenase (466 aa).

36 to 45 (ERYQNVGGGC) is a binding site for FAD.

It belongs to the class-I pyridine nucleotide-disulfide oxidoreductase family. Homooligomer; probable homooctamer. FAD serves as cofactor.

It is found in the cytoplasm. The catalysed reaction is NAD(+) + NADPH = NADH + NADP(+). Conversion of NADPH, generated by peripheral catabolic pathways, to NADH, which can enter the respiratory chain for energy generation. The polypeptide is Soluble pyridine nucleotide transhydrogenase (Escherichia coli O157:H7).